The sequence spans 406 residues: Glycosyltransferase GlyE (406 aa).

Positions 3 to 265 (NTKRAVVFAG…SVILNEWFSK (263 aa)) are GT8 domain. UDP is bound by residues 11–16 (AGDYAY) and 106–107 (DS). 3 residues coordinate Mn(2+): aspartate 106, aspartate 108, and histidine 227. 227–233 (HYISQDK) contributes to the UDP binding site.

The protein in the N-terminal section; belongs to the glycosyltransferase 8 family. Mn(2+) serves as cofactor.

The protein operates within protein modification; protein glycosylation. Involved in the polymorphic O-glycosylation of the serine-rich repeat protein PsrP. Catalyzes the third step in glycosylation of PsrP in this bacteria. Transfers galactose from UDP-galactose to the terminal glucose moiety of already-glycosylated PsrP (using the short substrate PsrP-GlcNAc-Glc). Has a very marked preference for PsrP substrate that has already been modified by GlcNAc and glucose. Has hydrolytic activity against UDP-galactose but none against UDP-glucose. In terms of biological role, also catalyzes the fourth step in glycosylation of PsrP in this bacteria. Can transfer the sugar from UDP-galactose to the terminal sugar moiety of PsrP-GlcNAc-Glc-Glc and of PsrP-GlcNAc-Glc-Gal. The polypeptide is Glycosyltransferase GlyE (Streptococcus pneumoniae serotype 4 (strain ATCC BAA-334 / TIGR4)).